Here is a 319-residue protein sequence, read N- to C-terminus: Olfactory receptor 56B4 (319 aa).

The Extracellular portion of the chain corresponds to 1–31 (MDTSTSVTYDSSLQISQFILMGLPGIHEWQH). The helical transmembrane segment at 32–52 (WLSLPLTLLYLLALGANLLII) threads the bilayer. Residues 53-60 (ITIQHETV) are Cytoplasmic-facing. The chain crosses the membrane as a helical span at residues 61-81 (LHEPMYHLLGILAVVDIGLAT). Over 82 to 105 (TIMPKILAIFWFDAKAISLPMCFA) the chain is Extracellular. Cysteine 103 and cysteine 195 form a disulfide bridge. The helical transmembrane segment at 106–126 (QIYAIHCFFCIESGIFLCMAV) threads the bilayer. The Cytoplasmic segment spans residues 127–145 (DRYIAICRPLQYPSIVTKA). A helical transmembrane segment spans residues 146–166 (FVFKATGFIMLRNGLLTIPVP). Residues 167–202 (ILAAQRHYCSRNEIEHCLCSNLGVISLACDDITVNK) are Extracellular-facing. A helical transmembrane segment spans residues 203–223 (FYQLMLAWVLVGSDMALVFSS). The Cytoplasmic portion of the chain corresponds to 224–243 (YAVILHSVLRLNSAEAMSKA). Residues 244–263 (LSTCSSHLILILFHTGIIVL) form a helical membrane-spanning segment. The Extracellular segment spans residues 264-277 (SVTHLAEKKIPLIP). A helical membrane pass occupies residues 278–298 (VFLNVLHNVIPPALNPLACAL). Residues 299–319 (RMHKLRLGFQRLLGLGQDVSK) are Cytoplasmic-facing.

The protein belongs to the G-protein coupled receptor 1 family.

It localises to the cell membrane. Functionally, odorant receptor. This Homo sapiens (Human) protein is Olfactory receptor 56B4 (OR56B4).